The following is a 191-amino-acid chain: RNA polymerase sigma factor CnrH (191 aa).

A Polymerase core binding motif is present at residues 49–62; it reads DVVQDTFVAAWHAL. Positions 156–175 form a DNA-binding region, H-T-H motif; sequence QPEAAAVLGLSVKAVEGRIG.

The protein belongs to the sigma-70 factor family. ECF subfamily.

Its function is as follows. Sigma factors are initiation factors that promote the attachment of RNA polymerase to specific initiation sites and are then released. This sigma factor regulates the genes for a membrane-located efflux system that confers resistance to nickel and cobalt. In terms of biological role, cnrH alone is able to activate CNR expression, while both CnrY and CrnX are needed for nickel induction of cnrH. Binds DNA in an RNA polymerase-dependent fashion. CnrH may be controlled by a CnrYX transmembrane anti-sigma factor complex which binds CnrH in the absence of Ni(2+). If Ni(2+) appears in the periplasm, it may be bound by CnrR (CnrX); the signal then would be transmitted by CnrY into the cytoplasm and CnrH would be released. The sequence is that of RNA polymerase sigma factor CnrH (cnrH) from Cupriavidus metallidurans (strain ATCC 43123 / DSM 2839 / NBRC 102507 / CH34) (Ralstonia metallidurans).